The sequence spans 355 residues: DNA-directed RNA polymerase subunit alpha (355 aa).

Residues 1–248 (MYYDDGIPVF…EQLQPFISSD (248 aa)) are alpha N-terminal domain (alpha-NTD). The tract at residues 267 to 355 (YDPILLRKVD…ELARQHTDED (89 aa)) is alpha C-terminal domain (alpha-CTD).

The protein belongs to the RNA polymerase alpha chain family. Homodimer. The RNAP catalytic core consists of 2 alpha, 1 beta, 1 beta' and 1 omega subunit. When a sigma factor is associated with the core the holoenzyme is formed, which can initiate transcription.

It carries out the reaction RNA(n) + a ribonucleoside 5'-triphosphate = RNA(n+1) + diphosphate. Functionally, DNA-dependent RNA polymerase catalyzes the transcription of DNA into RNA using the four ribonucleoside triphosphates as substrates. This chain is DNA-directed RNA polymerase subunit alpha, found in Wolbachia sp. subsp. Brugia malayi (strain TRS).